The primary structure comprises 55 residues: UPF0434 protein BARBAKC583_1098 (55 aa).

This sequence belongs to the UPF0434 family.

This is UPF0434 protein BARBAKC583_1098 from Bartonella bacilliformis (strain ATCC 35685 / KC583 / Herrer 020/F12,63).